The sequence spans 349 residues: MYISNLRLQNFRNIPAKSFDFKNSINFIVGKNGSGKTSILESIYFLSHSRSFRSSQLNRIINHNADEFIIYTKAYNPDEITISLSRKKNSNNISKLNLEIQKNHTEITRNLPIQLINPESFNIINSGAQQRCKVIDWGAFYLDKTFLKIWQQTKFLVKQRNSALKQNYPYSYILSIDKKLCEFAEILDYKRQAYFTKLKPKIYEILSHFNPNLQLDIDYFRGWNLHKSLAQVLEESFNYDNKYKVTNHGPHKADIVLSVSHKPIQDIFSRGQQKLLICALKLAQGEIHNSENDNKCIYLIDDITSELDSIHTLTLFNYLKQLKSQVFITTTEKNKINEFIDTNSYILEI.

An ATP-binding site is contributed by 30 to 37 (GKNGSGKT).

It belongs to the RecF family.

The protein localises to the cytoplasm. Its function is as follows. The RecF protein is involved in DNA metabolism; it is required for DNA replication and normal SOS inducibility. RecF binds preferentially to single-stranded, linear DNA. It also seems to bind ATP. In Francisella tularensis subsp. holarctica (strain FTNF002-00 / FTA), this protein is DNA replication and repair protein RecF.